Reading from the N-terminus, the 353-residue chain is Guanine nucleotide-binding protein subunit alpha (353 aa).

Positions 1-26 are disordered; the sequence is MGCGMSTEEKEGKARNEEIENQLKRD. A lipid anchor (N-myristoyl glycine) is attached at Gly-2. The S-palmitoyl cysteine moiety is linked to residue Cys-3. Positions 7-26 are enriched in basic and acidic residues; that stretch reads TEEKEGKARNEEIENQLKRD. In terms of domain architecture, G-alpha spans 32–353; it reads NEIKMLLLGA…QENLRLCGLI (322 aa). The interval 35 to 48 is G1 motif; it reads KMLLLGAGESGKST. GTP is bound by residues Glu-43, Ser-44, Gly-45, Lys-46, Ser-47, Thr-48, Asp-150, Leu-175, Thr-181, Gly-203, Asn-269, Lys-270, Asp-272, and Ala-325. Position 47 (Ser-47) interacts with Mg(2+). The interval 173 to 181 is G2 motif; the sequence is DVLRSRVKT. Position 181 (Thr-181) interacts with Mg(2+). The G3 motif stretch occupies residues 196–205; the sequence is YRMFDVGGQR. A G4 motif region spans residues 265-272; the sequence is ILFLNKID. Positions 323–328 are G5 motif; that stretch reads TCATDT.

This sequence belongs to the G-alpha family. G(q) subfamily. In terms of assembly, g proteins are composed of 3 units; alpha, beta and gamma. The alpha chain contains the guanine nucleotide binding site. It depends on Mg(2+) as a cofactor.

In terms of biological role, guanine nucleotide-binding proteins (G proteins) are involved as modulators or transducers in various transmembrane signaling systems. This is Guanine nucleotide-binding protein subunit alpha from Cryphonectria parasitica (Chestnut blight fungus).